Reading from the N-terminus, the 416-residue chain is S-adenosylmethionine synthase (416 aa).

An ATP-binding site is contributed by H14. D16 serves as a coordination point for Mg(2+). E42 lines the K(+) pocket. Positions 55 and 98 each coordinate L-methionine. Residues 98–108 (QSADINQGVDR) form a flexible loop region. ATP contacts are provided by residues 164–166 (DAK), 240–241 (KF), D249, 255–256 (RK), A272, and K276. Residue D249 coordinates L-methionine. Position 280 (K280) interacts with L-methionine.

This sequence belongs to the AdoMet synthase family. As to quaternary structure, homotetramer; dimer of dimers. Mg(2+) serves as cofactor. Requires K(+) as cofactor.

It localises to the cytoplasm. It carries out the reaction L-methionine + ATP + H2O = S-adenosyl-L-methionine + phosphate + diphosphate. Its pathway is amino-acid biosynthesis; S-adenosyl-L-methionine biosynthesis; S-adenosyl-L-methionine from L-methionine: step 1/1. Its function is as follows. Catalyzes the formation of S-adenosylmethionine (AdoMet) from methionine and ATP. The overall synthetic reaction is composed of two sequential steps, AdoMet formation and the subsequent tripolyphosphate hydrolysis which occurs prior to release of AdoMet from the enzyme. This is S-adenosylmethionine synthase from Flavobacterium psychrophilum (strain ATCC 49511 / DSM 21280 / CIP 103535 / JIP02/86).